The following is a 1599-amino-acid chain: MVAQASGKEVESDKSAKEKRKVTEASSDDPQPGIDLVRKESLTSSESFPTVECSEFQSMAFLQSLGKERLVEGIKRRIRIKKFKSLESPALKMTENKATQNSKVEFQDELYKNTLKYSCNSLSPGVENNSTLKLHDCSCLSHSKDCNDENNLAYKPDGGCMHVPENSSKSKKENPRSLIDKTDPSNIPQLLQTEENLMRVSQLLLEENDSYLSKNNGMFSCLQSEKNKHSIEESSIGRKSRKRMKVSEKGNGMVIEMKFSNMCNKSELMLQGNQTGAEGKETETLEAKKSSLKVLRKVNNNTLSPMDPLLSLPETGKKTSPEHYANAVFQKAVEQLSKEETKNVSQPLGCTSMDPPEDYFKSMKNSLVKSLSDCFPIEKRSSREGLKNEAEESKYSCHRTIPMTGKRTWPCYSCARISAQCWKKASLPQSSRQDDFLRHQMNQTHLSDSKLMLQSSVTETNSASSSIEKLDSNLNCLPSVSTVEPTSVVIKEPIVNDDEKMKSEELSRSASEVVSNITEDTPLTNVTHNSTGSKKKDRGNLTKLNLMVASQDGQEASNSTGKTVHRKACITKQALVVPDLVKILNTGRLTNFKIPLLKNKTEKRKEINAKSSEREVYSPLELLDSLSGAEVRQSRTKENTVTVTSGPQSLSIQHSVIPVQASSDSFCSKNSCIIAPSFLKQGNNNKPSSHISASGHIISNKAAGSLTVENNTFSCDPGCIEKNPTFYSNEQEPFKAVSSEVSGRKMSKNFSEIKVGFPDILKAYEDDVLLIDVIQDDPDLFGVSSEGELSFPSEVPLISQEPNVAEEHQSADSKHMELPEKKEPSDHLRELPVPDPGSVKSEICASLSAASEIKHDSKDANISLGEVTHETSSNEKPGGLSEQTKSSDLDEKCRFSDKVAIREEKETISEVFRSDSKNTEIMVGECHLAALVSKPLCLPVPLPPLNLSTHQEDTLLNPWMNDFRLPGKHSLLKLQNPEICEIFKREKNLGVFQKPLGLIIPHRYCKFHFNTIRGCERSQCKFAHVPEQGDEKVCMDVFKKYISISELCLLQRAANMFMEYYRKFLPGIHFDLQVLNDLLNSLLKHCLLKEVFQIMNLCIMIKMLPALKILLKIFEYVATMKLRNAVPALIDMFCKLVEAGMVLDLEHFNYIVKLLYQVQASKQEITAVLEMKSRLRMRQFKKNWKCDLEAALNEIEHCKEKGDWTKLGNVYLNIKMSCEKFADFQRFCAYIAEILTKDCKEERPGVPFCEFAETVSKDLQNSEVDKTLLGRIGISAMYFYHKLLQWSKGRKVLDKLYEKIHCTSLKGLIGPEKLAPRCQIVNIAAEIFLKSGSLDGAIWVLRESEWIINTPVWPCDRLDVLNRHNLLCTIAHEILAKSLYRQTFEVLQNLPGFQNSQETVEVSQYSLLFNKLLDACIESNSLGMSSSVAEFMISKSIPIDFSFLRRLITSLGRSCLWLKARAHYKSALSLGCYPPLEGNLYRKLLLIPSYLSEIEMLLAIEIFLVSNASSIQSPGTSTQMLQIVLKRSEENKSRSKDDYQAAVERLIMAARISDPKLFIKHMTVNVNKEQVYSLEHCSALKWLKENMKWGVKVWLFNNR.

4 disordered regions span residues 1-42 (MVAQ…KESL), 159-185 (GCMHVPENSSKSKKENPRSLIDKTDPS), 802-836 (PNVAEEHQSADSKHMELPEKKEPSDHLRELPVPDP), and 867-889 (VTHETSSNEKPGGLSEQTKSSDL). 2 stretches are compositionally biased toward basic and acidic residues: residues 168–183 (SKSKKENPRSLIDKTD) and 805–832 (AEEHQSADSKHMELPEKKEPSDHLRELP). Residues 874 to 884 (NEKPGGLSEQT) are compositionally biased toward polar residues.

As to expression, expressed in both adult testis and fetal ovary, mostly in germ cells (at protein level).

It localises to the cytoplasm. The protein localises to the cytosol. Important for normal spermatogenesis and male fertility. Specifically required for progression to the post-meiotic stages of spermatocyte development. Seems to be necessary for normal expression levels of a number of testis-expressed gene transcripts, although its role in this process is unclear. In Ovis aries (Sheep), this protein is Protein TOPAZ1 (TOPAZ1).